The sequence spans 127 residues: Holo-[acyl-carrier-protein] synthase (127 aa).

Positions 9 and 58 each coordinate Mg(2+).

Belongs to the P-Pant transferase superfamily. AcpS family. Mg(2+) is required as a cofactor.

Its subcellular location is the cytoplasm. The enzyme catalyses apo-[ACP] + CoA = holo-[ACP] + adenosine 3',5'-bisphosphate + H(+). Functionally, transfers the 4'-phosphopantetheine moiety from coenzyme A to a Ser of acyl-carrier-protein. The chain is Holo-[acyl-carrier-protein] synthase from Shewanella sp. (strain W3-18-1).